A 302-amino-acid chain; its full sequence is Recombination-associated protein RdgC (302 aa).

This sequence belongs to the RdgC family.

The protein localises to the cytoplasm. It localises to the nucleoid. May be involved in recombination. This is Recombination-associated protein RdgC from Xylella fastidiosa (strain 9a5c).